Reading from the N-terminus, the 319-residue chain is Annexin A4 (319 aa).

A2 is subject to N-acetylalanine. T7 is modified (phosphothreonine). S12 carries the post-translational modification Phosphoserine. Annexin repeat units follow at residues 14–85, 86–157, 169–241, and 245–316; these read FSAT…GMIT, PTVL…SLSA, ALMR…AIVK, and NKSA…ILCG. K213, K293, and K300 each carry N6-acetyllysine.

This sequence belongs to the annexin family. As to expression, expressed in pancreas (at protein level). Also detected in liver, spleen, intestine, stomach, kidney, and adrenal glands.

It is found in the zymogen granule membrane. Functionally, calcium/phospholipid-binding protein which promotes membrane fusion and is involved in exocytosis. This chain is Annexin A4 (ANXA4), found in Canis lupus familiaris (Dog).